Here is a 144-residue protein sequence, read N- to C-terminus: Small ribosomal subunit protein uS12 (144 aa).

Asp103 is subject to 3-methylthioaspartic acid. The interval 125 to 144 (QQGRSRYGAKKGKAAPAKKK) is disordered. Basic residues predominate over residues 131–144 (YGAKKGKAAPAKKK).

Belongs to the universal ribosomal protein uS12 family. As to quaternary structure, part of the 30S ribosomal subunit. Contacts proteins S8 and S17. May interact with IF1 in the 30S initiation complex.

With S4 and S5 plays an important role in translational accuracy. Its function is as follows. Interacts with and stabilizes bases of the 16S rRNA that are involved in tRNA selection in the A site and with the mRNA backbone. Located at the interface of the 30S and 50S subunits, it traverses the body of the 30S subunit contacting proteins on the other side and probably holding the rRNA structure together. The combined cluster of proteins S8, S12 and S17 appears to hold together the shoulder and platform of the 30S subunit. This is Small ribosomal subunit protein uS12 from Dehalococcoides mccartyi (strain ATCC BAA-2100 / JCM 16839 / KCTC 5957 / BAV1).